Reading from the N-terminus, the 310-residue chain is Probable GTP 3',8-cyclase (310 aa).

The Radical SAM core domain occupies 5 to 218 (KYGRSLQKLR…VNIIFELGGR (214 aa)). Position 14 (arginine 14) interacts with GTP. Residues cysteine 21, cysteine 25, and cysteine 28 each coordinate [4Fe-4S] cluster. Position 62 (lysine 62) interacts with GTP. Glycine 66 is an S-adenosyl-L-methionine binding site. Threonine 91 contacts GTP. Serine 115 provides a ligand contact to S-adenosyl-L-methionine. Lysine 153 serves as a coordination point for GTP. 3 residues coordinate [4Fe-4S] cluster: cysteine 251, cysteine 254, and cysteine 268.

Belongs to the radical SAM superfamily. MoaA family. It depends on [4Fe-4S] cluster as a cofactor.

It carries out the reaction GTP + AH2 + S-adenosyl-L-methionine = (8S)-3',8-cyclo-7,8-dihydroguanosine 5'-triphosphate + 5'-deoxyadenosine + L-methionine + A + H(+). The protein operates within cofactor biosynthesis; molybdopterin biosynthesis. Catalyzes the cyclization of GTP to (8S)-3',8-cyclo-7,8-dihydroguanosine 5'-triphosphate. In Pyrobaculum aerophilum (strain ATCC 51768 / DSM 7523 / JCM 9630 / CIP 104966 / NBRC 100827 / IM2), this protein is Probable GTP 3',8-cyclase.